The sequence spans 1073 residues: ATP-dependent helicase/deoxyribonuclease subunit B (1073 aa).

The protein belongs to the helicase family. AddB/RexB type 2 subfamily. As to quaternary structure, heterodimer of AddA and RexB. Mg(2+) is required as a cofactor.

The heterodimer acts as both an ATP-dependent DNA helicase and an ATP-dependent, dual-direction single-stranded exonuclease. Recognizes the chi site generating a DNA molecule suitable for the initiation of homologous recombination. This subunit has 5' -&gt; 3' nuclease activity but not helicase activity. This Streptococcus equi subsp. zooepidemicus (strain H70) protein is ATP-dependent helicase/deoxyribonuclease subunit B.